A 607-amino-acid chain; its full sequence is UvrABC system protein C (607 aa).

Residues 16 to 94 (GRPGVYRMFD…IKEWRPPYNI (79 aa)) form the GIY-YIG domain. The UVR domain occupies 203–238 (NALTDELSAGMEQAASTLDFEKAAELRDQISLLRRV).

Belongs to the UvrC family. Interacts with UvrB in an incision complex.

The protein resides in the cytoplasm. The UvrABC repair system catalyzes the recognition and processing of DNA lesions. UvrC both incises the 5' and 3' sides of the lesion. The N-terminal half is responsible for the 3' incision and the C-terminal half is responsible for the 5' incision. This Pseudomonas protegens (strain DSM 19095 / LMG 27888 / CFBP 6595 / CHA0) protein is UvrABC system protein C.